We begin with the raw amino-acid sequence, 272 residues long: Phosphoribosylformylglycinamidine synthase subunit PurQ (272 aa).

Residues 8-243 enclose the Glutamine amidotransferase type-1 domain; sequence VLVMSGYGIN…SEPEYQLKKE (236 aa). The active-site Nucleophile is the cysteine 98. Residues histidine 225, glutamate 227, and glutamate 235 contribute to the active site.

Part of the FGAM synthase complex composed of 1 PurL, 1 PurQ and 2 PurS subunits.

It localises to the cytoplasm. It carries out the reaction N(2)-formyl-N(1)-(5-phospho-beta-D-ribosyl)glycinamide + L-glutamine + ATP + H2O = 2-formamido-N(1)-(5-O-phospho-beta-D-ribosyl)acetamidine + L-glutamate + ADP + phosphate + H(+). It catalyses the reaction L-glutamine + H2O = L-glutamate + NH4(+). It functions in the pathway purine metabolism; IMP biosynthesis via de novo pathway; 5-amino-1-(5-phospho-D-ribosyl)imidazole from N(2)-formyl-N(1)-(5-phospho-D-ribosyl)glycinamide: step 1/2. In terms of biological role, part of the phosphoribosylformylglycinamidine synthase complex involved in the purines biosynthetic pathway. Catalyzes the ATP-dependent conversion of formylglycinamide ribonucleotide (FGAR) and glutamine to yield formylglycinamidine ribonucleotide (FGAM) and glutamate. The FGAM synthase complex is composed of three subunits. PurQ produces an ammonia molecule by converting glutamine to glutamate. PurL transfers the ammonia molecule to FGAR to form FGAM in an ATP-dependent manner. PurS interacts with PurQ and PurL and is thought to assist in the transfer of the ammonia molecule from PurQ to PurL. The chain is Phosphoribosylformylglycinamidine synthase subunit PurQ from Methanococcus maripaludis (strain C7 / ATCC BAA-1331).